The following is a 213-amino-acid chain: Alkylbase DNA glycosidase-like protein mag2 (213 aa).

15 residues coordinate DNA: Lys53, Leu54, Ser61, His91, Gly94, Ser96, Lys97, Lys99, Glu102, Lys137, Gly138, Lys140, Thr143, Ser163, and Thr164.

It belongs to the alkylbase DNA glycosidase AlkA family.

It is found in the nucleus. Functionally, alkylbase DNA glycosidase-like protein that shows no DNA glycosylase activity for alkylated bases. The molecular role of mag2 appears to be abasic (AP) site recognition and protection, while possibly facilitating damage signaling by structurally sculpting the DNA substrate. Stimulates AP site binding to mismatch repair protein mutS. In Schizosaccharomyces pombe (strain 972 / ATCC 24843) (Fission yeast), this protein is Alkylbase DNA glycosidase-like protein mag2.